The following is a 245-amino-acid chain: 1-(5-phosphoribosyl)-5-[(5-phosphoribosylamino)methylideneamino] imidazole-4-carboxamide isomerase (245 aa).

Catalysis depends on Asp7, which acts as the Proton acceptor. Asp129 functions as the Proton donor in the catalytic mechanism.

It belongs to the HisA/HisF family.

Its subcellular location is the cytoplasm. The catalysed reaction is 1-(5-phospho-beta-D-ribosyl)-5-[(5-phospho-beta-D-ribosylamino)methylideneamino]imidazole-4-carboxamide = 5-[(5-phospho-1-deoxy-D-ribulos-1-ylimino)methylamino]-1-(5-phospho-beta-D-ribosyl)imidazole-4-carboxamide. It participates in amino-acid biosynthesis; L-histidine biosynthesis; L-histidine from 5-phospho-alpha-D-ribose 1-diphosphate: step 4/9. This chain is 1-(5-phosphoribosyl)-5-[(5-phosphoribosylamino)methylideneamino] imidazole-4-carboxamide isomerase, found in Aliivibrio fischeri (strain MJ11) (Vibrio fischeri).